Consider the following 481-residue polypeptide: Trigger factor (481 aa).

Residues 161 to 298 enclose the PPIase FKBP-type domain; that stretch reads GDQLTATVQT…VSEIQNRQLP (138 aa). Positions 173-245 are disordered; that stretch reads DGVPLHKLDE…PTTLIMEERR (73 aa). Over residues 182–235 the composition is skewed to acidic residues; it reads EEDDDDDDDDDDDDDDDDDDDDDDDDDDDDDDDDDDDDDDDDDDDDDDDDDEGE.

The protein belongs to the FKBP-type PPIase family. Tig subfamily.

It is found in the cytoplasm. The enzyme catalyses [protein]-peptidylproline (omega=180) = [protein]-peptidylproline (omega=0). Functionally, involved in protein export. Acts as a chaperone by maintaining the newly synthesized protein in an open conformation. Functions as a peptidyl-prolyl cis-trans isomerase. The sequence is that of Trigger factor from Herpetosiphon aurantiacus (strain ATCC 23779 / DSM 785 / 114-95).